The chain runs to 167 residues: MLIRVEIPIDAPGIDALLRRSFESDAEAKLVHDLREDGFLTLGLVATDDEGQVIGYVAFSPVDVQGEDLQWVGMAPLAVDEKYRGQGLARQLVYEGLDSLNEFGYAAVVTLGDPALYSRFGFELAAHHDLRCRWPGTESAFQVHRLADDALNGVTGLVEYHEHFNRF.

An N-acetyltransferase domain is found at 1–148 (MLIRVEIPID…SAFQVHRLAD (148 aa)).

It belongs to the acetyltransferase family.

This is an uncharacterized protein from Escherichia coli O157:H7.